The primary structure comprises 272 residues: NADPH-dependent aldehyde reductase 2, chloroplastic (272 aa).

The transit peptide at 1 to 53 (MAAASSVSSPPLCLAGRVAIVTGSSRGIGRAIAIHLAELGARVVVNYSTSPVE) directs the protein to the chloroplast. 26–50 (RGIGRAIAIHLAELGARVVVNYSTS) is a binding site for NADP(+). S165 is a substrate binding site. The active-site Proton acceptor is Y179.

This sequence belongs to the short-chain dehydrogenases/reductases (SDR) family.

It localises to the plastid. The protein localises to the chloroplast. In terms of biological role, aldehyde reductase that catalyzes the reduction of the aldehyde carbonyl groups on saturated and alpha,beta-unsaturated aldehydes with more than 5 carbons. No activity on alpha,beta-unsaturated ketones. Can use propionaldehyde, butyraldehyde, methylglyoxal, (e)-2-pentenal, (E)-2-hexenal, (Z)-3-hexenal and (E)-2-nonenal as substrates, but not propenal (acrolein), crotonaldehyde, 2-butanone, 3-buten-2-one or 1-penten-3-one. The sequence is that of NADPH-dependent aldehyde reductase 2, chloroplastic from Arabidopsis thaliana (Mouse-ear cress).